The chain runs to 242 residues: Ribosomal RNA small subunit methyltransferase G (242 aa).

S-adenosyl-L-methionine-binding positions include G78, F83, 129-130 (AE), and R148.

The protein belongs to the methyltransferase superfamily. RNA methyltransferase RsmG family.

The protein resides in the cytoplasm. Its function is as follows. Specifically methylates the N7 position of a guanine in 16S rRNA. In Lachnoclostridium phytofermentans (strain ATCC 700394 / DSM 18823 / ISDg) (Clostridium phytofermentans), this protein is Ribosomal RNA small subunit methyltransferase G.